Consider the following 200-residue polypeptide: Nascent polypeptide-associated complex subunit alpha (200 aa).

Residues 1-19 show a composition bias toward basic and acidic residues; sequence MADPRVEELPEEEVKKTQV. Disordered stretches follow at residues 1–54 and 118–165; these read MADP…NEKK and AAQQ…EDKD. Positions 20–34 are enriched in acidic residues; that stretch reads EDLDNSSDDESDIEA. One can recognise an NAC-A/B domain in the interval 49–114; the sequence is SRNEKKARKA…AKIEDLNASA (66 aa). Positions 127-146 are enriched in basic and acidic residues; that stretch reads AEHDHAGHTHEHEEAGKAKE. Acidic residues predominate over residues 147–160; it reads EEEEDEGEEVDAEG. Positions 161–200 constitute a UBA domain; sequence IEDKDIELVMTQANVSRKKAIKALKENDNDIVNSIMALSI.

Belongs to the NAC-alpha family. In terms of assembly, part of the nascent polypeptide-associated complex (NAC), consisting of npc-1/egd2 and npc-2/egd1. NAC associates with ribosomes via npc-2/egd1.

The protein localises to the cytoplasm. Its subcellular location is the nucleus. Functionally, component of the nascent polypeptide-associated complex (NAC), a dynamic component of the ribosomal exit tunnel, protecting the emerging polypeptides from interaction with other cytoplasmic proteins to ensure appropriate nascent protein targeting. The NAC complex also promotes mitochondrial protein import by enhancing productive ribosome interactions with the outer mitochondrial membrane and blocks the inappropriate interaction of ribosomes translating non-secretory nascent polypeptides with translocation sites in the membrane of the endoplasmic reticulum. Npc-1/egd2 may also be involved in transcription regulation. The chain is Nascent polypeptide-associated complex subunit alpha (npc-1) from Neurospora crassa (strain ATCC 24698 / 74-OR23-1A / CBS 708.71 / DSM 1257 / FGSC 987).